A 1299-amino-acid polypeptide reads, in one-letter code: DNA-directed RNA polymerase subunit beta' (1299 aa).

4 residues coordinate Zn(2+): Cys-60, Cys-62, Cys-75, and Cys-78. The interval 385 to 405 is disordered; it reads GRRGRPVTGPGNRPLKSLSDM. Residues Asp-535, Asp-537, and Asp-539 each contribute to the Mg(2+) site. The Zn(2+) site is built by Cys-886, Cys-962, Cys-969, and Cys-972.

The protein belongs to the RNA polymerase beta' chain family. The RNAP catalytic core consists of 2 alpha, 1 beta, 1 beta' and 1 omega subunit. When a sigma factor is associated with the core the holoenzyme is formed, which can initiate transcription. Requires Mg(2+) as cofactor. Zn(2+) serves as cofactor.

It catalyses the reaction RNA(n) + a ribonucleoside 5'-triphosphate = RNA(n+1) + diphosphate. DNA-dependent RNA polymerase catalyzes the transcription of DNA into RNA using the four ribonucleoside triphosphates as substrates. The protein is DNA-directed RNA polymerase subunit beta' of Streptomyces coelicolor (strain ATCC BAA-471 / A3(2) / M145).